Reading from the N-terminus, the 102-residue chain is NADH-quinone oxidoreductase subunit K (102 aa).

The next 3 membrane-spanning stretches (helical) occupy residues 5–25 (LEHY…GIFL), 31–51 (IVIL…LVAF), and 66–86 (FVLT…VVFF).

This sequence belongs to the complex I subunit 4L family. NDH-1 is composed of 14 different subunits. Subunits NuoA, H, J, K, L, M, N constitute the membrane sector of the complex.

It localises to the cell inner membrane. The enzyme catalyses a quinone + NADH + 5 H(+)(in) = a quinol + NAD(+) + 4 H(+)(out). NDH-1 shuttles electrons from NADH, via FMN and iron-sulfur (Fe-S) centers, to quinones in the respiratory chain. The immediate electron acceptor for the enzyme in this species is believed to be ubiquinone. Couples the redox reaction to proton translocation (for every two electrons transferred, four hydrogen ions are translocated across the cytoplasmic membrane), and thus conserves the redox energy in a proton gradient. The sequence is that of NADH-quinone oxidoreductase subunit K from Parvibaculum lavamentivorans (strain DS-1 / DSM 13023 / NCIMB 13966).